Reading from the N-terminus, the 400-residue chain is Snake venom metalloproteinase H1 (400 aa).

The N-terminal stretch at 1 to 6 (FPYQGS) is a signal peptide. Positions 7–176 (SIILESGNVN…KKASQLIVST (170 aa)) are excised as a propeptide. The Peptidase M12B domain maps to 180 to 377 (RYMEIVIVVD…ENPPCILNKP (198 aa)). Positions 183 and 267 each coordinate Ca(2+). Cystine bridges form between C291-C372, C331-C356, and C333-C339. H316 provides a ligand contact to Zn(2+). Residue E317 is part of the active site. Zn(2+) is bound by residues H320 and H326. C372, N375, V387, N390, L392, E394, and D400 together coordinate Ca(2+). A propeptide spanning residues 378-400 (LRTDTVSTPVSGNELLEAGKDYD) is cleaved from the precursor.

Belongs to the venom metalloproteinase (M12B) family. P-I subfamily. Monomer. Zn(2+) is required as a cofactor. Expressed by the venom gland.

It is found in the secreted. In terms of biological role, snake venom metalloproteinase that impairs hemostasis in the envenomed animal. The protein is Snake venom metalloproteinase H1 of Deinagkistrodon acutus (Hundred-pace snake).